Reading from the N-terminus, the 921-residue chain is Protein translocase subunit SecA (921 aa).

Residues Gln86, Gly104–Thr108, and Asp497 contribute to the ATP site. Positions Gln829–Gln838 are enriched in low complexity. The tract at residues Gln829–Ala921 is disordered. Residues Val839–Pro855 are compositionally biased toward pro residues. Zn(2+)-binding residues include Cys901, Cys903, Cys912, and His913.

The protein belongs to the SecA family. In terms of assembly, monomer and homodimer. Part of the essential Sec protein translocation apparatus which comprises SecA, SecYEG and auxiliary proteins SecDF-YajC and YidC. It depends on Zn(2+) as a cofactor.

The protein resides in the cell inner membrane. Its subcellular location is the cytoplasm. The catalysed reaction is ATP + H2O + cellular proteinSide 1 = ADP + phosphate + cellular proteinSide 2.. Functionally, part of the Sec protein translocase complex. Interacts with the SecYEG preprotein conducting channel. Has a central role in coupling the hydrolysis of ATP to the transfer of proteins into and across the cell membrane, serving both as a receptor for the preprotein-SecB complex and as an ATP-driven molecular motor driving the stepwise translocation of polypeptide chains across the membrane. The chain is Protein translocase subunit SecA from Hyphomonas neptunium (strain ATCC 15444).